We begin with the raw amino-acid sequence, 124 residues long: Fluoride-specific ion channel FluC (124 aa).

4 helical membrane passes run 1 to 21 (MGVV…RFLL), 35 to 55 (VGTL…FAYL), 68 to 88 (LLIT…YESF), and 99 to 119 (FLAY…LGYI). The Na(+) site is built by G75 and T78.

Belongs to the fluoride channel Fluc/FEX (TC 1.A.43) family.

Its subcellular location is the cell inner membrane. It carries out the reaction fluoride(in) = fluoride(out). Na(+) is not transported, but it plays an essential structural role and its presence is essential for fluoride channel function. In terms of biological role, fluoride-specific ion channel. Important for reducing fluoride concentration in the cell, thus reducing its toxicity. The polypeptide is Fluoride-specific ion channel FluC (Aquifex aeolicus (strain VF5)).